We begin with the raw amino-acid sequence, 323 residues long: Small ribosomal subunit protein uS3 (323 aa).

Residues 17-86 (IDEFFADELG…DPQIDVQEVD (70 aa)) form the KH type-2 domain. The disordered stretch occupies residues 251–303 (ADPGVSSEDEEVVTEPVDIGGDDEDVEDIEVVSDDSGNDTETVAEEVEELDAE). Residues 270–303 (GGDDEDVEDIEVVSDDSGNDTETVAEEVEELDAE) show a composition bias toward acidic residues.

This sequence belongs to the universal ribosomal protein uS3 family. Part of the 30S ribosomal subunit.

Functionally, binds the lower part of the 30S subunit head. This is Small ribosomal subunit protein uS3 from Haloquadratum walsbyi (strain DSM 16790 / HBSQ001).